A 102-amino-acid polypeptide reads, in one-letter code: Small ribosomal subunit protein uS10 (102 aa).

It belongs to the universal ribosomal protein uS10 family. As to quaternary structure, part of the 30S ribosomal subunit.

Involved in the binding of tRNA to the ribosomes. In Thermococcus kodakarensis (strain ATCC BAA-918 / JCM 12380 / KOD1) (Pyrococcus kodakaraensis (strain KOD1)), this protein is Small ribosomal subunit protein uS10.